A 188-amino-acid polypeptide reads, in one-letter code: ATP synthase subunit b (188 aa).

A helical transmembrane segment spans residues 5–25 (MLLIFMMIVMIASSAMAAEAE).

The protein belongs to the ATPase B chain family. F-type ATPases have 2 components, F(1) - the catalytic core - and F(0) - the membrane proton channel. F(1) has five subunits: alpha(3), beta(3), gamma(1), delta(1), epsilon(1). F(0) has three main subunits: a(1), b(2) and c(10-14). The alpha and beta chains form an alternating ring which encloses part of the gamma chain. F(1) is attached to F(0) by a central stalk formed by the gamma and epsilon chains, while a peripheral stalk is formed by the delta and b chains.

Its subcellular location is the cell inner membrane. Its function is as follows. F(1)F(0) ATP synthase produces ATP from ADP in the presence of a proton or sodium gradient. F-type ATPases consist of two structural domains, F(1) containing the extramembraneous catalytic core and F(0) containing the membrane proton channel, linked together by a central stalk and a peripheral stalk. During catalysis, ATP synthesis in the catalytic domain of F(1) is coupled via a rotary mechanism of the central stalk subunits to proton translocation. Component of the F(0) channel, it forms part of the peripheral stalk, linking F(1) to F(0). This chain is ATP synthase subunit b, found in Thermodesulfovibrio yellowstonii (strain ATCC 51303 / DSM 11347 / YP87).